Consider the following 51-residue polypeptide: Sperm protamine P1 (51 aa).

Disulfide bonds link cysteine 7/cysteine 15 and cysteine 38/cysteine 48.

This sequence belongs to the protamine P1 family. As to quaternary structure, cross-linked by interchain disulfide bonds around the DNA-helix. In terms of processing, phosphorylated by SRPK1. Testis.

It is found in the nucleus. It localises to the chromosome. In terms of biological role, protamines substitute for histones in the chromatin of sperm during the haploid phase of spermatogenesis. They compact sperm DNA into a highly condensed, stable and inactive complex. The polypeptide is Sperm protamine P1 (Prm1) (Rattus norvegicus (Rat)).